The primary structure comprises 710 residues: Adenylosuccinate synthetase (710 aa).

Disordered stretches follow at residues 1–51 (MPVR…PVPQ) and 84–111 (DEPP…GRSK). Composition is skewed to polar residues over residues 10 to 27 (YNNS…STTA) and 101 to 111 (ANASSSSGRSK). Residues 180–186 (GDEGKGK) and 210–212 (GHT) each bind GTP. The Proton acceptor role is filled by D181. The Mg(2+) site is built by D181 and G210. IMP is bound by residues 181 to 184 (DEGK), 208 to 211 (NAGH), T295, K309, Q421, T437, and K567. H211 functions as the Proton donor in the catalytic mechanism. 563–569 (AVTKKPR) lines the substrate pocket. GTP-binding positions include R569 and 697–699 (GNG).

Belongs to the adenylosuccinate synthetase family. In terms of assembly, homodimer. The cofactor is Mg(2+).

Its subcellular location is the cytoplasm. It carries out the reaction IMP + L-aspartate + GTP = N(6)-(1,2-dicarboxyethyl)-AMP + GDP + phosphate + 2 H(+). Its pathway is purine metabolism; AMP biosynthesis via de novo pathway; AMP from IMP: step 1/2. Functionally, plays an important role in the salvage pathway for purine nucleotide biosynthesis. Catalyzes the first committed step in the biosynthesis of AMP from IMP. This Leishmania infantum protein is Adenylosuccinate synthetase.